A 690-amino-acid chain; its full sequence is BURP domain-containing protein 14 (690 aa).

Residues 1–26 (MAPPRHARLVAATIAVLLCHLPRSAA) form the signal peptide. Residues 134–163 (GSSWSKSSSDGDGAAAAAAPAGGGGGGGGG) are disordered. The span at 135 to 153 (SSWSKSSSDGDGAAAAAAP) shows a compositional bias: low complexity. Residues 154–163 (AGGGGGGGGG) are compositionally biased toward gly residues. N-linked (GlcNAc...) asparagine glycosylation is present at N178. Residues 201–211 (SNGGGGGGGGV) are compositionally biased toward gly residues. The interval 201–232 (SNGGGGGGGGVDSFRRYGKGSQGRNDSFTSYE) is disordered. N-linked (GlcNAc...) asparagine glycosylation is found at N225, N317, N379, N432, N450, and N601. In terms of domain architecture, BURP spans 477-689 (FFRERDLVAG…FQGDMTWTVA (213 aa)).

As to expression, expressed in panicles.

The polypeptide is BURP domain-containing protein 14 (BURP14) (Oryza sativa subsp. japonica (Rice)).